Here is a 967-residue protein sequence, read N- to C-terminus: Haze protective factor 1 (967 aa).

The N-terminal stretch at 1-23 is a signal peptide; the sequence is MFNRFNKLQAALALVLYSQSALG. N-linked (GlcNAc...) asparagine glycans are attached at residues Asn28 and Asn35. The disordered stretch occupies residues 72 to 301; that stretch reads SSSTEVSSSI…STSSASTASG (230 aa). A run of 9 repeats spans residues 93 to 105, 106 to 118, 119 to 131, 132 to 144, 153 to 165, 166 to 178, 179 to 191, 192 to 204, and 205 to 217. Positions 93 to 278 are 13 X approximate repeats, Ser-rich; sequence SITSSGSSVS…QSGSSVSGSS (186 aa). One copy of the 1-10; approximate repeat lies at 218–230; it reads SATESGSASSVPS. Residues 234 to 247 form a 1-11; approximate repeat; the sequence is SVTESGSSSSASES. A 1-12; approximate repeat occupies 248 to 259; the sequence is SITQSGTASGSS. One copy of the 1-13 repeat lies at 266 to 278; sequence SVTQSGSSVSGSS. N-linked (GlcNAc...) asparagine glycosylation is found at Asn493, Asn601, and Asn638. Repeat copies occupy residues 745–780, 781–815, 816–854, and 855–893. The interval 745-902 is 4.5 X approximate tandem repeats, Thr-rich; the sequence is SSKSYTTVTV…ASPKSYTTVT (158 aa). The tract at residues 836–857 is disordered; it reads KTVTSEAPKETSETSETSAAPK. The 2-5; truncated repeat unit spans residues 894 to 902; the sequence is SPKSYTTVT. Ala946 carries GPI-anchor amidated alanine lipidation. A propeptide spans 947–967 (removed in mature form); sequence AGLNANTLNALVGIFVLAFFN.

This sequence belongs to the SRP1/TIP1 family. Post-translationally, the GPI-anchor is attached to the protein in the endoplasmic reticulum and serves to target the protein to the cell surface. There, the glucosamine-inositol phospholipid moiety is cleaved off and the GPI-modified mannoprotein is covalently attached via its lipidless GPI glycan remnant to the 1,6-beta-glucan of the outer cell wall layer.

The protein localises to the secreted. The protein resides in the cell wall. It localises to the membrane. In terms of biological role, involved in cell wall organization and biosynthesis. In Saccharomyces cerevisiae (strain ATCC 204508 / S288c) (Baker's yeast), this protein is Haze protective factor 1 (HPF1).